The sequence spans 204 residues: Small ribosomal subunit protein uS4 (204 aa).

The segment at 25-45 (AVPSRRAYPPGQHGQARKKRS) is disordered. In terms of domain architecture, S4 RNA-binding spans 92-152 (MRLDNIIFRL…NKENSRRLAE (61 aa)).

The protein belongs to the universal ribosomal protein uS4 family. Part of the 30S ribosomal subunit. Contacts protein S5. The interaction surface between S4 and S5 is involved in control of translational fidelity.

Functionally, one of the primary rRNA binding proteins, it binds directly to 16S rRNA where it nucleates assembly of the body of the 30S subunit. With S5 and S12 plays an important role in translational accuracy. This chain is Small ribosomal subunit protein uS4, found in Cyanothece sp. (strain PCC 7425 / ATCC 29141).